A 292-amino-acid chain; its full sequence is Transmembrane and ubiquitin-like domain-containing protein 1 (292 aa).

Residues 11–31 (VTLLFGVVFLVLVLVLAWAST) traverse the membrane as a helical segment. The segment at 34-143 (VEPPEHLLSP…TQPSAEDAAS (110 aa)) is disordered. A compositionally biased stretch (basic and acidic residues) spans 71-80 (VRDEDDKSEP). Positions 84–94 (AGAAGQSADGS) are enriched in low complexity. The 74-residue stretch at 149-222 (MVLRLKFLND…LHCHISQHAT (74 aa)) folds into the Ubiquitin-like domain. A run of 2 helical transmembrane segments spans residues 237–257 (VALN…SVLW) and 269–289 (APAT…AFGV).

It is found in the membrane. Its subcellular location is the cytoplasm. It localises to the nucleus. Functionally, may contribute to the regulation of translation during cell-cycle progression. May contribute to the regulation of cell proliferation. The membrane form is involved in sterol-regulated ubiquitination and degradation of HMG-CoA reductase HMGCR. May be involved in centrosome assembly. The polypeptide is Transmembrane and ubiquitin-like domain-containing protein 1 (tmub1) (Danio rerio (Zebrafish)).